A 113-amino-acid chain; its full sequence is Hydrogenase maturation factor HybF (113 aa).

Ni(2+)-binding residues include His2 and Glu3. 4 residues coordinate Zn(2+): Cys73, Cys76, Cys89, and Cys92.

It belongs to the HypA/HybF family. HybF subfamily. Monomer.

Involved in the maturation of [NiFe] hydrogenases. Required for nickel insertion into the metal center of the hydrogenase. HybF is involved in maturation of hydrogenases 1 and 2. It may partially substitute for the function of HypA and vice versa. The chain is Hydrogenase maturation factor HybF from Escherichia coli (strain K12).